A 790-amino-acid polypeptide reads, in one-letter code: Lon protease (790 aa).

Residues 13–209 (LPLFPIRNTV…RLTDHVAKEI (197 aa)) form the Lon N-terminal domain. Residue 362 to 369 (GPPGVGKT) participates in ATP binding. One can recognise a Lon proteolytic domain in the interval 598-779 (DNQVGITIGL…DQVLDIALAT (182 aa)). Catalysis depends on residues Ser685 and Lys728.

This sequence belongs to the peptidase S16 family. As to quaternary structure, homohexamer. Organized in a ring with a central cavity.

The protein resides in the cytoplasm. The enzyme catalyses Hydrolysis of proteins in presence of ATP.. Functionally, ATP-dependent serine protease that mediates the selective degradation of mutant and abnormal proteins as well as certain short-lived regulatory proteins. Required for cellular homeostasis and for survival from DNA damage and developmental changes induced by stress. Degrades polypeptides processively to yield small peptide fragments that are 5 to 10 amino acids long. Binds to DNA in a double-stranded, site-specific manner. The polypeptide is Lon protease (Orientia tsutsugamushi (strain Ikeda) (Rickettsia tsutsugamushi)).